The sequence spans 561 residues: DNA ligase B (561 aa).

Lys-125 serves as the catalytic N6-AMP-lysine intermediate.

The protein belongs to the NAD-dependent DNA ligase family. LigB subfamily.

The catalysed reaction is NAD(+) + (deoxyribonucleotide)n-3'-hydroxyl + 5'-phospho-(deoxyribonucleotide)m = (deoxyribonucleotide)n+m + AMP + beta-nicotinamide D-nucleotide.. Its function is as follows. Catalyzes the formation of phosphodiester linkages between 5'-phosphoryl and 3'-hydroxyl groups in double-stranded DNA using NAD as a coenzyme and as the energy source for the reaction. This chain is DNA ligase B, found in Salmonella paratyphi A (strain AKU_12601).